A 312-amino-acid chain; its full sequence is Small kinetochore-associated protein (312 aa).

A disordered region spans residues 1-171 (MAAPEAEAQE…PFNKQKPEEE (171 aa)). Residues 131-143 (DVTKVTKSRRENG) show a composition bias toward basic and acidic residues. Positions 156 to 312 (LRNSYKPFNK…LEEMEQLLEM (157 aa)) are interaction with SPAG5. Coiled coils occupy residues 166-210 (QKPE…LEKF) and 246-287 (LLET…QFLE).

In terms of assembly, part of an astrin (SPAG5)-kinastrin (SKAP) complex containing KNSTRN, SPAG5, PLK1, DYNLL1 and SGO2A. Interacts with SPAG5. Directly binds to microtubules, although at relatively low affinity. Interacts with CENPE; this interaction greatly favors microtubule-binding. Interacts with DSN1/MIS13; leading to localization to kinetochores. Interacts with MAPRE1/EB1; leading to localization to the microtubule plus ends. Interacts with PRPF19. Interacts with DYNLL1. Interacts with MAP4.

It is found in the nucleus. Its subcellular location is the chromosome. It localises to the centromere. The protein resides in the kinetochore. The protein localises to the cytoplasm. It is found in the cytoskeleton. Its subcellular location is the spindle pole. It localises to the microtubule organizing center. Essential component of the mitotic spindle required for faithful chromosome segregation and progression into anaphase. Promotes the metaphase-to-anaphase transition and is required for chromosome alignment, normal timing of sister chromatid segregation, and maintenance of spindle pole architecture. The astrin (SPAG5)-kinastrin (SKAP) complex promotes stable microtubule-kinetochore attachments. Required for kinetochore oscillations and dynamics of microtubule plus-ends during live cell mitosis, possibly by forming a link between spindle microtubule plus-ends and mitotic chromosomes to achieve faithful cell division. This Mus musculus (Mouse) protein is Small kinetochore-associated protein (Knstrn).